The following is a 166-amino-acid chain: Peptide methionine sulfoxide reductase MsrA (166 aa).

Residue Cys11 is part of the active site.

This sequence belongs to the MsrA Met sulfoxide reductase family.

The enzyme catalyses L-methionyl-[protein] + [thioredoxin]-disulfide + H2O = L-methionyl-(S)-S-oxide-[protein] + [thioredoxin]-dithiol. The catalysed reaction is [thioredoxin]-disulfide + L-methionine + H2O = L-methionine (S)-S-oxide + [thioredoxin]-dithiol. In terms of biological role, has an important function as a repair enzyme for proteins that have been inactivated by oxidation. Catalyzes the reversible oxidation-reduction of methionine sulfoxide in proteins to methionine. The chain is Peptide methionine sulfoxide reductase MsrA from Mycoplasmopsis pulmonis (strain UAB CTIP) (Mycoplasma pulmonis).